The chain runs to 215 residues: MADS-box transcription factor 4 (215 aa).

Residues 1 to 61 (MGRGKIEIKR…GKLSDYCTPK (61 aa)) form the MADS-box domain. The region spanning 89 to 175 (HKSLSAEIDR…AFRVHQQEVE (87 aa)) is the K-box domain.

As to quaternary structure, may interact with the K-box of MADS16. As to expression, highly expressed in lodicules, at intermediate levels in stamens, and weakly in carpels. Expressed in pollen.

It is found in the nucleus. Its function is as follows. Probable transcription factor involved in the development of floral organs. B-class protein required for normal development of lodicules and stamens (whorls 2 and 3). May function as a heterodimer with MADS16. The polypeptide is MADS-box transcription factor 4 (MADS4) (Oryza sativa subsp. japonica (Rice)).